A 617-amino-acid chain; its full sequence is Secretogranin-2 (617 aa).

The first 30 residues, 1–30 (MAGAKAYRLGAVLLLIHLIFLISGAEAASF), serve as a signal peptide directing secretion. Tyr153 bears the Sulfotyrosine mark. Phosphoserine occurs at positions 176 and 270. Basic and acidic residues-rich tracts occupy residues 261–286 (TQTQEEVRDSKENTEKNEQINEEMKR) and 295–307 (EENRRESKDQLSE). The tract at residues 261 to 307 (TQTQEEVRDSKENTEKNEQINEEMKRSGQLGLPDEENRRESKDQLSE) is disordered. A phosphoserine mark is found at Ser434, Ser532, Ser555, and Ser556.

It belongs to the chromogranin/secretogranin protein family. In terms of assembly, interacts with Secretogranin III/SCG3.

The protein localises to the secreted. Functionally, neuroendocrine protein of the granin family that regulates the biogenesis of secretory granules. This chain is Secretogranin-2 (Scg2), found in Mus musculus (Mouse).